The primary structure comprises 21 residues: C-phycocyanin alpha subunit (21 aa).

Belongs to the phycobiliprotein family. In terms of assembly, heterodimer of an alpha and a beta subunit, which further assembles into trimers and the trimers into hexamers. In terms of processing, contains one covalently linked bilin chromophore.

It localises to the cellular thylakoid membrane. Functionally, light-harvesting photosynthetic bile pigment-protein from the phycobiliprotein complex (phycobilisome, PBS). Phycocyanin is the major phycobiliprotein in the PBS rod. The chain is C-phycocyanin alpha subunit from Anabaena sp. (strain L31).